Consider the following 128-residue polypeptide: Transcription antitermination protein NusB (128 aa).

The protein belongs to the NusB family.

Functionally, involved in transcription antitermination. Required for transcription of ribosomal RNA (rRNA) genes. Binds specifically to the boxA antiterminator sequence of the ribosomal RNA (rrn) operons. In Staphylococcus carnosus (strain TM300), this protein is Transcription antitermination protein NusB.